The sequence spans 141 residues: Hemoglobin subunit beta-C(NA) (141 aa).

The region spanning 1-141 is the Globin domain; sequence PBKALITGFW…VASALAHRYH (141 aa). Positions 58 and 87 each coordinate heme b.

Belongs to the globin family. In terms of assembly, heterotetramer of two alpha chains and two beta chains. Red blood cells.

Its function is as follows. Involved in oxygen transport from the lung to the various peripheral tissues. The chain is Hemoglobin subunit beta-C(NA) from Ammotragus lervia (Barbary sheep).